The chain runs to 188 residues: Adenine phosphoribosyltransferase (188 aa).

This sequence belongs to the purine/pyrimidine phosphoribosyltransferase family. In terms of assembly, homodimer.

Its subcellular location is the cytoplasm. The enzyme catalyses AMP + diphosphate = 5-phospho-alpha-D-ribose 1-diphosphate + adenine. It participates in purine metabolism; AMP biosynthesis via salvage pathway; AMP from adenine: step 1/1. Catalyzes a salvage reaction resulting in the formation of AMP, that is energically less costly than de novo synthesis. The polypeptide is Adenine phosphoribosyltransferase (Neisseria meningitidis serogroup C (strain 053442)).